The sequence spans 573 residues: Methionine--tRNA ligase (573 aa).

The short motif at 11–21 (PYINGIKHLGN) is the 'HIGH' region element. The Zn(2+) site is built by Cys143, Cys146, Cys156, and Cys159. The short motif at 346 to 350 (QFSTS) is the 'KMSKS' region element. Thr349 provides a ligand contact to ATP.

This sequence belongs to the class-I aminoacyl-tRNA synthetase family. MetG type 1 subfamily. As to quaternary structure, monomer. Zn(2+) is required as a cofactor.

The protein localises to the cytoplasm. It carries out the reaction tRNA(Met) + L-methionine + ATP = L-methionyl-tRNA(Met) + AMP + diphosphate. Is required not only for elongation of protein synthesis but also for the initiation of all mRNA translation through initiator tRNA(fMet) aminoacylation. The protein is Methionine--tRNA ligase of Ruegeria sp. (strain TM1040) (Silicibacter sp.).